The chain runs to 710 residues: Lactoperoxidase (710 aa).

A signal peptide spans 1-22; sequence MKVLLRLPALLASLTLLQMAAS. The propeptide occupies 23–98; sequence TRNATRTATI…WEQSLKRLRR (76 aa). Asn-25, Asn-104, and Asn-131 each carry an N-linked (GlcNAc...) asparagine glycan. A disulfide bond links Cys-130 and Cys-143. A heme b-binding site is contributed by Asp-223. The active-site Proton acceptor is the His-224. Asp-225 lines the Ca(2+) pocket. Asn-238 carries N-linked (GlcNAc...) asparagine glycosylation. 2 disulfides stabilise this stretch: Cys-244-Cys-254 and Cys-248-Cys-272. The Ca(2+) site is built by Thr-299, Phe-301, Asp-303, and Ser-305. Ser-313 is subject to Phosphoserine. N-linked (GlcNAc...) asparagine glycosylation occurs at Asn-320. An intrachain disulfide couples Cys-352 to Cys-363. Residues Glu-373 and His-466 each contribute to the heme b site. Tyr-480 carries the post-translational modification 3'-nitrotyrosine. Cystine bridges form between Cys-571-Cys-628 and Cys-669-Cys-694.

It belongs to the peroxidase family. XPO subfamily. Ca(2+) serves as cofactor. Heme b is required as a cofactor. In terms of tissue distribution, expressed in the lacrimal gland with higher levels and 3-fold higher activity in adult females than males and secreted into tears (at protein level).

It is found in the secreted. It localises to the cytoplasm. It carries out the reaction 2 a phenolic donor + H2O2 = 2 a phenolic radical donor + 2 H2O. The catalysed reaction is thiocyanate + H2O2 + H(+) = hypothiocyanous acid + H2O. The enzyme catalyses iodide + H2O2 = hypoiodite + H2O. Functionally, heme-containing oxidoreductase which catalyzes the conversion of thiocyanate (SCN(-)) into antimicrobial agent hypothiocyanous acid (OSCN(-)) in the presence of hydrogen peroxide (H2O2). Also involved in the conversion of iodide (I(-)) into hypoiodite (IO(-)) in the presence of H2O2. Responsible for the inactivation of a wide range of micro-organisms and hence, important component of defense mechanism. May be implicated in airway host defense against infection. May contribute to maintaining an appropriate H2O2 cellular level, therefore protecting cells from H2O2-caused injuries and inflammation. This is Lactoperoxidase (LPO) from Mesocricetus auratus (Golden hamster).